The chain runs to 220 residues: MDDFRKYATKHLGMNGMVLDDVIKSQAGYLNPYILEERQLNVTQLDVFSRLMMDRIIFLGTQVDDYTANTLQAQLLYLDSVDPGKDISIYINSPGGSVYAGLGIYDTMQFISSDVATICTGMAASMAAVLLVAGAEGKRSALPHSRVMIHQPMGGAQGQASDIEITAREIQKLKKELYTIIADHSHTDFDKVWADSDRDYWMTAQEAKEYGMIDEVLIKK.

Ser125 serves as the catalytic Nucleophile. The active site involves His150.

Belongs to the peptidase S14 family. In terms of assembly, fourteen ClpP subunits assemble into 2 heptameric rings which stack back to back to give a disk-like structure with a central cavity, resembling the structure of eukaryotic proteasomes.

Its subcellular location is the cytoplasm. It carries out the reaction Hydrolysis of proteins to small peptides in the presence of ATP and magnesium. alpha-casein is the usual test substrate. In the absence of ATP, only oligopeptides shorter than five residues are hydrolyzed (such as succinyl-Leu-Tyr-|-NHMec, and Leu-Tyr-Leu-|-Tyr-Trp, in which cleavage of the -Tyr-|-Leu- and -Tyr-|-Trp bonds also occurs).. Cleaves peptides in various proteins in a process that requires ATP hydrolysis. Has a chymotrypsin-like activity. Plays a major role in the degradation of misfolded proteins. This is ATP-dependent Clp protease proteolytic subunit from Bacteroides thetaiotaomicron (strain ATCC 29148 / DSM 2079 / JCM 5827 / CCUG 10774 / NCTC 10582 / VPI-5482 / E50).